Reading from the N-terminus, the 843-residue chain is Protein P (843 aa).

The terminal protein domain (TP) stretch occupies residues 1-177; that stretch reads MPLSYQHFRK…FCGSPYSWEQ (177 aa). The tract at residues 178-346 is spacer; the sequence is DLQHGRLVFQ…YCLSHIVNLI (169 aa). 2 disordered regions span residues 219–249 and 290–316; these read RKSR…RIHP and STSK…RSQS. Polar residues predominate over residues 290-299; sequence STSKGHSSSG. The segment at 347–690 is polymerase/reverse transcriptase domain (RT); it reads EDWGPCAEHG…YMTLYPVARQ (344 aa). The Reverse transcriptase domain occupies 357-600; that stretch reads EHRIRTPRTP…YSLNFMGYVI (244 aa). The Mg(2+) site is built by aspartate 429, aspartate 551, and aspartate 552.

Belongs to the hepadnaviridae P protein family.

The catalysed reaction is DNA(n) + a 2'-deoxyribonucleoside 5'-triphosphate = DNA(n+1) + diphosphate. The enzyme catalyses Endonucleolytic cleavage to 5'-phosphomonoester.. Its activity is regulated as follows. Activated by host HSP70 and HSP40 in vitro to be able to bind the epsilon loop of the pgRNA. Because deletion of the RNase H region renders the protein partly chaperone-independent, the chaperones may be needed indirectly to relieve occlusion of the RNA-binding site by this domain. Inhibited by several reverse-transcriptase inhibitors: Lamivudine, Adefovir and Entecavir. Multifunctional enzyme that converts the viral RNA genome into dsDNA in viral cytoplasmic capsids. This enzyme displays a DNA polymerase activity that can copy either DNA or RNA templates, and a ribonuclease H (RNase H) activity that cleaves the RNA strand of RNA-DNA heteroduplexes in a partially processive 3'- to 5'-endonucleasic mode. Neo-synthesized pregenomic RNA (pgRNA) are encapsidated together with the P protein, and reverse-transcribed inside the nucleocapsid. Initiation of reverse-transcription occurs first by binding the epsilon loop on the pgRNA genome, and is initiated by protein priming, thereby the 5'-end of (-)DNA is covalently linked to P protein. Partial (+)DNA is synthesized from the (-)DNA template and generates the relaxed circular DNA (RC-DNA) genome. After budding and infection, the RC-DNA migrates in the nucleus, and is converted into a plasmid-like covalently closed circular DNA (cccDNA). The activity of P protein does not seem to be necessary for cccDNA generation, and is presumably released from (+)DNA by host nuclear DNA repair machinery. This Homo sapiens (Human) protein is Protein P.